The chain runs to 474 residues: Lipoprotein lipase (474 aa).

The signal sequence occupies residues 1–27 (MESKALLLVALGVWLQSLTAFRGGVAA). The interval 32–53 (RDFSDIESKFALRTPEDTAEDT) is interaction with GPIHBP1. Cys-54 and Cys-67 are oxidised to a cystine. Residue Asn-70 is glycosylated (N-linked (GlcNAc...) asparagine). The residue at position 121 (Tyr-121) is a 3'-nitrotyrosine. The active-site Nucleophile is the Ser-159. Residue Asp-183 is the Charge relay system of the active site. Position 191 is a 3'-nitrotyrosine (Tyr-191). 4 residues coordinate Ca(2+): Ala-194, Arg-197, Ser-199, and Asp-202. Cys-243 and Cys-266 are oxidised to a cystine. The essential for determining substrate specificity stretch occupies residues 243 to 266 (CNIGEAIRVIAEKGLGDVDQLVKC). His-268 acts as the Charge relay system in catalysis. Disulfide bonds link Cys-291–Cys-310 and Cys-302–Cys-305. The PLAT domain maps to 341-464 (FHYQVKIHFS…KGKDAAVFVK (124 aa)). Position 343 is a 3'-nitrotyrosine (Tyr-343). Asn-386 carries N-linked (GlcNAc...) asparagine glycosylation. Residues 417 to 421 (WSDWW) are important for interaction with lipoprotein particles. The interval 430 to 434 (KIRVK) is important for heparin binding. Residues 443-467 (IFCAREKVSHLQKGKDAAVFVKCHD) form an interaction with GPIHBP1 region. A disulfide bridge links Cys-445 with Cys-465.

This sequence belongs to the AB hydrolase superfamily. Lipase family. As to quaternary structure, homodimer. Interacts with GPIHBP1 with 1:1 stoichiometry. Interacts with APOC2; the interaction activates LPL activity in the presence of lipids. Interaction with heparan sulfate proteoglycans is required to protect LPL against loss of activity. Associates with lipoprotein particles in blood plasma. Interacts with LMF1 and SEL1L; interaction with SEL1L is required to prevent aggregation of newly synthesized LPL in the endoplasmic reticulum (ER), and for normal export of LPL from the ER to the extracellular space. Interacts with SORL1; SORL1 acts as a sorting receptor, promoting LPL localization to endosomes and later to lysosomes, leading to degradation of newly synthesized LPL. Tyrosine nitration after lipopolysaccharide (LPS) challenge down-regulates the lipase activity.

It is found in the cell membrane. The protein resides in the secreted. It localises to the extracellular space. The protein localises to the extracellular matrix. The enzyme catalyses a triacylglycerol + H2O = a diacylglycerol + a fatty acid + H(+). It carries out the reaction a 1,2-diacyl-sn-glycero-3-phosphocholine + H2O = a 2-acyl-sn-glycero-3-phosphocholine + a fatty acid + H(+). The catalysed reaction is 1,2,3-tri-(9Z-octadecenoyl)-glycerol + H2O = di-(9Z)-octadecenoylglycerol + (9Z)-octadecenoate + H(+). It catalyses the reaction 1,2-di-(9Z-octadecenoyl)-sn-glycero-3-phosphocholine + H2O = (9Z-octadecenoyl)-sn-glycero-3-phosphocholine + (9Z)-octadecenoate + H(+). The enzyme catalyses 1,2,3-tributanoylglycerol + H2O = dibutanoylglycerol + butanoate + H(+). It carries out the reaction 1,2-dihexadecanoyl-sn-glycero-3-phosphocholine + H2O = hexadecanoyl-sn-glycero-3-phosphocholine + hexadecanoate + H(+). The apolipoprotein APOC2 acts as a coactivator of LPL activity. Ca(2+) binding promotes protein stability and formation of the active homodimer. Interaction with GPIHBP1 protects LPL against inactivation by ANGPTL4. Key enzyme in triglyceride metabolism. Catalyzes the hydrolysis of triglycerides from circulating chylomicrons and very low density lipoproteins (VLDL), and thereby plays an important role in lipid clearance from the blood stream, lipid utilization and storage. Although it has both phospholipase and triglyceride lipase activities it is primarily a triglyceride lipase with low but detectable phospholipase activity. Mediates margination of triglyceride-rich lipoprotein particles in capillaries. Recruited to its site of action on the luminal surface of vascular endothelium by binding to GPIHBP1 and cell surface heparan sulfate proteoglycans. In Rattus norvegicus (Rat), this protein is Lipoprotein lipase (Lpl).